The chain runs to 213 residues: Glutathione S-transferase (213 aa).

The GST N-terminal domain maps to 4–81; that stretch reads AKPILYGAWI…YLEDKYPQHP (78 aa). A GST C-terminal domain is found at 86-211; sequence DIKTKGLDLQ…LPQNQPDAPS (126 aa).

The protein belongs to the GST superfamily. Zeta family.

The protein localises to the cytoplasm. The enzyme catalyses RX + glutathione = an S-substituted glutathione + a halide anion + H(+). In terms of biological role, has a glutathione transferase activity with ethacrynic acid and nitrophenyl acetate. Has low glutathione peroxidase activity with cumene hydroperoxide. The polypeptide is Glutathione S-transferase (GSTZ1) (Triticum aestivum (Wheat)).